Consider the following 98-residue polypeptide: NADH-ubiquinone oxidoreductase chain 4L (98 aa).

Helical transmembrane passes span 1 to 21 (MTSINLNLMTAFLLALAGVLM), 28 to 48 (STLLCLEGMMLSLYIMLSLLI), and 59 to 79 (APLILLVISACEAAGGLALLV).

This sequence belongs to the complex I subunit 4L family. As to quaternary structure, core subunit of respiratory chain NADH dehydrogenase (Complex I) which is composed of 45 different subunits.

The protein resides in the mitochondrion inner membrane. The enzyme catalyses a ubiquinone + NADH + 5 H(+)(in) = a ubiquinol + NAD(+) + 4 H(+)(out). Its function is as follows. Core subunit of the mitochondrial membrane respiratory chain NADH dehydrogenase (Complex I) which catalyzes electron transfer from NADH through the respiratory chain, using ubiquinone as an electron acceptor. Part of the enzyme membrane arm which is embedded in the lipid bilayer and involved in proton translocation. The polypeptide is NADH-ubiquinone oxidoreductase chain 4L (MT-ND4L) (Phascolarctos cinereus (Koala)).